Here is a 223-residue protein sequence, read N- to C-terminus: Chalcone--flavanone isomerase 2 (223 aa).

Substrate is bound by residues threonine 41, asparagine 106, and serine 183.

This sequence belongs to the chalcone isomerase family.

It carries out the reaction a chalcone = a flavanone.. The protein operates within secondary metabolite biosynthesis; flavonoid biosynthesis. Functionally, catalyzes the intramolecular cyclization of bicyclic chalcones into tricyclic (S)-flavanones. Responsible for the isomerization of 4,2',4',6'-tetrahydroxychalcone (also termed chalcone) into naringenin. The chain is Chalcone--flavanone isomerase 2 (CHI2) from Arabidopsis thaliana (Mouse-ear cress).